A 357-amino-acid chain; its full sequence is Acyl-coenzyme A diphosphatase NUDT19 (357 aa).

A Nudix hydrolase domain is found at 10–242 (AATVMLAAGW…IWLAPPQFYE (233 aa)). The Nudix box signature appears at 97–118 (AALPDDVALRICAIRETFEEAG). Glu112 and Glu116 together coordinate Mg(2+). Position 300 is an N6-succinyllysine (Lys300). Residues 355 to 357 (ARL) carry the Microbody targeting signal motif.

This sequence belongs to the Nudix hydrolase family. In terms of assembly, monomer. Requires Mg(2+) as cofactor. The cofactor is Mn(2+).

Its subcellular location is the peroxisome. It carries out the reaction an acyl-CoA + H2O = an acyl-4'-phosphopantetheine + adenosine 3',5'-bisphosphate + 2 H(+). The catalysed reaction is CoA + H2O = (R)-4'-phosphopantetheine + adenosine 3',5'-bisphosphate + 2 H(+). It catalyses the reaction hexanoyl-CoA + H2O = hexanoyl-4'-phosphopantetheine + adenosine 3',5'-bisphosphate + 2 H(+). The enzyme catalyses octanoyl-CoA + H2O = S-octanoyl-4'-phosphopantetheine + adenosine 3',5'-bisphosphate + 2 H(+). It carries out the reaction butanoyl-CoA + H2O = S-butanoyl-4'-phosphopantetheine + adenosine 3',5'-bisphosphate + 2 H(+). The catalysed reaction is propanoyl-CoA + H2O = propanoyl-4'-phosphopantetheine + adenosine 3',5'-bisphosphate + 2 H(+). It catalyses the reaction malonyl-CoA + H2O = malonyl-4'-phosphopantetheine + adenosine 3',5'-bisphosphate + 2 H(+). The enzyme catalyses succinyl-CoA + H2O = succinyl-4'-phosphopantetheine + adenosine 3',5'-bisphosphate + 2 H(+). It carries out the reaction choloyl-CoA + H2O = S-choloyl-4'-phosphopantetheine + adenosine 3',5'-bisphosphate + 2 H(+). The catalysed reaction is 4,8-dimethylnonanoyl-CoA + H2O = S-(4,8-dimethylnonanoyl)-4'-phosphopantetheine + adenosine 3',5'-bisphosphate + 2 H(+). It catalyses the reaction (9Z,12Z,15Z)-octadecatrienoyl-CoA + H2O = S-(9Z,12Z,15Z-octadecatrienoyl)-4'-phosphopantetheine + adenosine 3',5'-bisphosphate + 2 H(+). The enzyme catalyses (9Z,12Z)-octadecadienoyl-CoA + H2O = S-(9Z,12Z-octadecadienoyl)-4'-phosphopantetheine + adenosine 3',5'-bisphosphate + 2 H(+). It carries out the reaction (9Z)-hexadecenoyl-CoA + H2O = S-(9Z-hexadecenoyl)-4'-phosphopantetheine + adenosine 3',5'-bisphosphate + 2 H(+). The catalysed reaction is (9Z)-tetradecenoyl-CoA + H2O = S-(9Z-tetradecenoyl)-4'-phosphopantetheine + adenosine 3',5'-bisphosphate + 2 H(+). It catalyses the reaction (6Z)-octenoyl-CoA + H2O = S-(6Z-octenoyl)-4'-phosphopantetheine + adenosine 3',5'-bisphosphate + 2 H(+). The enzyme catalyses hexadecanoyl-CoA + H2O = S-hexadecanoyl-4'-phosphopantetheine + adenosine 3',5'-bisphosphate + 2 H(+). It carries out the reaction tetradecanoyl-CoA + H2O = tetradecanoyl-4'-phosphopantetheine + adenosine 3',5'-bisphosphate + 2 H(+). The catalysed reaction is dodecanoyl-CoA + H2O = S-dodecanoyl-4'-phosphopantetheine + adenosine 3',5'-bisphosphate + 2 H(+). It catalyses the reaction a 5'-end CoA-ribonucleoside in mRNA + H2O = a 5'-end phospho-adenosine-phospho-ribonucleoside in mRNA + (R)-4'-phosphopantetheine + 2 H(+). In terms of biological role, fatty acyl-coenzyme A (CoA) diphosphatase that hydrolyzes fatty acyl-CoA to yield acyl-4'-phosphopantetheine and adenosine 3',5'-bisphosphate. Mediates the hydrolysis of a wide range of CoA esters, including choloyl-CoA and branched-chain fatty-acyl-CoA esters and at low substrate concentrations medium and long-chain fatty-acyl-CoA esters are the primary substrates. Highest activity seen with medium-chain acyl-CoA esters and higher rates of activity seen with the unsaturated acyl-CoA esters compared with the saturated esters. Exhibits decapping activity towards dpCoA-capped RNAs in vitro. The chain is Acyl-coenzyme A diphosphatase NUDT19 (Nudt19) from Rattus norvegicus (Rat).